Consider the following 720-residue polypeptide: MFALPVRKFHEPYYERKPSHAKKINGVYQTLTTAGMEVEDGIRKAKELLKENVNPELMRRALGIYLIHSRDAQRRKIVVPPLMSHVSFLSNRSIPPQTVSTTAGPTVVAGEVVTADTFQGPALLSYWREDYDLNDFHYYWHMMFPGTTVNVGGENIKLMDRPGEHFLQIVSQMVARYETEGLCWNLPLVRPWNQYDDILEHGYVPVPGLIEYYGGYPPFSSWYSVRNPDIPDLPQVDVSRKQMETWRDNIYEAIKNGYFWGKKQGTNAERTPLPLTPDNCMDLVGSVVDAEYLTLPPSPDGLSVDGDLYGNLHNYGHGNFAEISYQNYPTKAAQYGLMISNFGALRDPCFWPWHKHIQYFRRLASAKFPQDITAHRAHVRLSSLVICPQRKSTSISREDGITAFLGPPALNLLESKAKIGHEPYQWSVDIQSTRSSPPSEDSPQALTLRLFIAAGDLVNDYHSWIEMDRVTVHLTSKSTLTKVRLDTDSSIARKMGSYSELDPKSTSPWDRCRWPQHMMLPVGKVEGMPFVAFCMATDDTTAPRTRVPNSNTFEAIQSDQRLSDPLGMGYPFNRAWVQDVMDNAGKASIRQIISDAQTYPFMTTTTFRIFRATKMFQDSILNPYIPPASVTWFNTIKDYFLESDKTCMLYAYGYDLGNYDHVRLHSGAILDATSSKRMPLQMSPWSQENPDPNHPLWTPEMCDTFRAWMLNGCPKGTDSA.

Cu cation contacts are provided by histidine 137, histidine 141, and histidine 313.

This sequence belongs to the tyrosinase family. Cu(2+) is required as a cofactor.

It catalyses the reaction (-)-cyclopenine = viridicatin + methyl isocyanate + H(+). The catalysed reaction is (-)-4'-methoxycyclopenine = 4'-methoxyviridicatin + methyl isocyanate + H(+). The protein operates within secondary metabolite biosynthesis. It functions in the pathway alkaloid biosynthesis. It participates in mycotoxin biosynthesis. In terms of biological role, cyclopenase; part of the gene cluster that mediates the biosynthesis of penigequinolones, potent insecticidal alkaloids that contain a highly modified 10-carbon prenyl group. The first stage is catalyzed by the nonribosomal peptide synthetase penN that condenses anthranilic acid and O-methyl-L-tyrosine to produce 4'-methoxycyclopeptin. 4'-methoxycyclopeptin is then converted to 4'-methoxydehydrocyclopeptin by the ketoglutarate-dependent dioxygenase penM through dehydrogenation to form a double bond between C-alpha and C-beta of the O-methyltyrosine side chain. PenM also converts its first product methoxydehydrocyclopeptin to 4'-methoxycyclopenin. The following conversion of 4'methoxycyclopenin into 4'-methoxyviridicatin is catalyzed by the cyclopenase penL. 4'-methoxyviridicatin is the precursor of quinolone natural products, and is further converted to quinolinone B. The prenyltransferase penI then catalyzes the canonical Friedel-Crafts alkylation of quinolinone B with dimethylallyl cation to yield dimethylallyl quinolone, which is subjected to FAD-dependent dehydrogenation by the FAD-linked oxidoreductase penH to yield conjugated aryl diene. The delta(3') double bond then serves as the site of the second alkylation with DMAPP catalyzed by the prenyltransferase penG to yield a carbenium ion intermediate, which can be attacked by H(2)O to yield a styrenyl quinolone containing a C3'-hydroxyprenyl chain, or undergo cyclization to yield yaequinolones J1 and J2. The conversion of the styrenyl quinolone into the tetrahydrofuran-containing yaequinolone C is performed by the FAD-dependent monooxygenase penE and involves epoxidation of the terminal C7'-C8' olefin, followed by epoxide ring opening initiated by the C3' hydroxyl group. The predicted cysteine hydrolase penJ acts as an epoxide hydrolase that enhances the rate of the 5-exo-tet cyclization step, increasing the yield of yaequinolone C. PenF catalyzes the cationic rearrangement of the epoxide formed by penE (before ring opening to produce yaequinolone C) into yaequinolone D. Finally, the short-chain dehydrogenase/reductase (SDR)-like reductase penD, catalyzes both the dehydration of yaequinolone D and the reduction of the resulting oxonium to yield penigequinolone. The protein is Cyclopenase penL of Penicillium thymicola.